A 442-amino-acid chain; its full sequence is UDP-N-acetylmuramate--L-alanine ligase (442 aa).

109–115 (GAHGKTS) provides a ligand contact to ATP.

It belongs to the MurCDEF family.

The protein resides in the cytoplasm. It carries out the reaction UDP-N-acetyl-alpha-D-muramate + L-alanine + ATP = UDP-N-acetyl-alpha-D-muramoyl-L-alanine + ADP + phosphate + H(+). It participates in cell wall biogenesis; peptidoglycan biosynthesis. Functionally, cell wall formation. The protein is UDP-N-acetylmuramate--L-alanine ligase of Streptococcus pyogenes serotype M18 (strain MGAS8232).